The chain runs to 173 residues: NADH-ubiquinone oxidoreductase chain 6 (173 aa).

A run of 5 helical transmembrane segments spans residues 1–21 (MTYLVLLLGLCFVLGGLAVAS), 27–47 (YGVVGLVLASVAGCGWLLSLG), 48–68 (VSFVSLVLFMVYLGGMLVVFV), 88–108 (VGYGASFILVVIAGMIVGGLI), and 139–159 (YGVGMFLVAGWGLLLTLFVVL).

It belongs to the complex I subunit 6 family.

It localises to the mitochondrion membrane. It catalyses the reaction a ubiquinone + NADH + 5 H(+)(in) = a ubiquinol + NAD(+) + 4 H(+)(out). Its function is as follows. Core subunit of the mitochondrial membrane respiratory chain NADH dehydrogenase (Complex I) that is believed to belong to the minimal assembly required for catalysis. Complex I functions in the transfer of electrons from NADH to the respiratory chain. The immediate electron acceptor for the enzyme is believed to be ubiquinone. The protein is NADH-ubiquinone oxidoreductase chain 6 (MT-ND6) of Calidris maritima (Purple sandpiper).